The sequence spans 93 residues: Alpha-defensin 26 (93 aa).

A signal peptide spans 1–19 (MKTLVLLSALFLLAFQVQA). A propeptide spanning residues 20-58 (DPIQNTDEETNTEVQPQEEDQAVSVSFGNPEGSDLQEES) is cleaved from the precursor. Positions 24 to 55 (NTDEETNTEVQPQEEDQAVSVSFGNPEGSDLQ) are disordered. The span at 25–40 (TDEETNTEVQPQEEDQ) shows a compositional bias: acidic residues. 3 disulfides stabilise this stretch: C64–C92, C66–C81, and C71–C91.

This sequence belongs to the alpha-defensin family.

Its subcellular location is the secreted. Functionally, may have microbicidal activities. This Mus musculus (Mouse) protein is Alpha-defensin 26 (Defa26).